A 578-amino-acid polypeptide reads, in one-letter code: Probable arginine--tRNA ligase, mitochondrial (578 aa).

The transit peptide at 1-16 (MACGFRRAIACQLSRV) directs the protein to the mitochondrion. Residues 133 to 135 (SPN), His144, Tyr322, Asp326, and Gln350 contribute to the L-arginine site. Residues 133–144 (SPNVAKKFHVGH) carry the 'HIGH' region motif. N6-acetyllysine is present on Lys568.

The protein belongs to the class-I aminoacyl-tRNA synthetase family.

The protein resides in the mitochondrion membrane. It catalyses the reaction tRNA(Arg) + L-arginine + ATP = L-arginyl-tRNA(Arg) + AMP + diphosphate. Catalyzes the attachment of arginine to tRNA(Arg) in a two-step reaction: arginine is first activated by ATP to form Arg-AMP and then transferred to the acceptor end of tRNA(Arg). The polypeptide is Probable arginine--tRNA ligase, mitochondrial (RARS2) (Homo sapiens (Human)).